Consider the following 270-residue polypeptide: UPF0354 protein BCA_4815 (270 aa).

This sequence belongs to the UPF0354 family.

The polypeptide is UPF0354 protein BCA_4815 (Bacillus cereus (strain 03BB102)).